A 197-amino-acid chain; its full sequence is Na(+)-translocating NADH-quinone reductase subunit E (197 aa).

6 helical membrane passes run 11–31 (SVFI…FLAV), 35–55 (VSTA…SVPA), 76–96 (FLKF…LEMF), 108–128 (LGIY…VSFM), 139–159 (VVYG…LAGI), and 175–195 (LGIT…FSGI).

It belongs to the NqrDE/RnfAE family. In terms of assembly, composed of six subunits; NqrA, NqrB, NqrC, NqrD, NqrE and NqrF.

Its subcellular location is the cell inner membrane. The enzyme catalyses a ubiquinone + n Na(+)(in) + NADH + H(+) = a ubiquinol + n Na(+)(out) + NAD(+). Functionally, NQR complex catalyzes the reduction of ubiquinone-1 to ubiquinol by two successive reactions, coupled with the transport of Na(+) ions from the cytoplasm to the periplasm. NqrA to NqrE are probably involved in the second step, the conversion of ubisemiquinone to ubiquinol. The polypeptide is Na(+)-translocating NADH-quinone reductase subunit E (Neisseria gonorrhoeae (strain ATCC 700825 / FA 1090)).